Reading from the N-terminus, the 561-residue chain is MNRVGAVFLFVYERNFFLSIVPDRHRTEIRMSSSERSEVKFDKHFNWWSLLGIAFSLSCSWVGISASMAVGIASGGPLLIIYGLIIAAFFSLMCGISLGDFAAILPNSSGGSFWVLKMLEQESVTLKTPEYEDPSDDDEEVFLENYCQTFNVEVSSKFQKVSSMVVGLLNYFGAIFTTASICSSLSMSCIGIHKLLHPDYELKHWHVFVGYECINAVLTLFNIYSTPLPYISQFGLYTSLLSFAMTFIICIVSRSDNTVDPWPKASNIFGSFDNQTGWNSSGMAFVVGLVNPIWAFVGIDSATHMIDEVGYSKSRFLVPKVIITTIIVGFVTSFIYCVGLFFCITDQTAVVESILPIVEIFYQATGNRNLSVFLQCMCITTGFVSGIASGTWQSRILQSFGKSYAPFYKEGSLGNKSLKKLAVLTPGFKSPLYAHFLSQICVTIIGCIFMGSSTAFNAIITACITLLLMSYAVPSFIFLFVIKKEKFIHRIESDVNCVSRPNRRRMSMIPHIICILWTLFCLVFLSFPYTLPVTAGNMNYTSVVYAVVFCIISIVVFPTCI.

Residues 1–49 lie on the Cytoplasmic side of the membrane; sequence MNRVGAVFLFVYERNFFLSIVPDRHRTEIRMSSSERSEVKFDKHFNWWS. Residues 50–70 traverse the membrane as a helical segment; that stretch reads LLGIAFSLSCSWVGISASMAV. Residues 71-77 lie on the Extracellular side of the membrane; the sequence is GIASGGP. Residues 78 to 98 form a helical membrane-spanning segment; it reads LLIIYGLIIAAFFSLMCGISL. Topologically, residues 99–160 are cytoplasmic; that stretch reads GDFAAILPNS…NVEVSSKFQK (62 aa). A helical transmembrane segment spans residues 161-181; the sequence is VSSMVVGLLNYFGAIFTTASI. Residues 182 to 204 lie on the Extracellular side of the membrane; it reads CSSLSMSCIGIHKLLHPDYELKH. Residues 205–225 traverse the membrane as a helical segment; sequence WHVFVGYECINAVLTLFNIYS. At 226-230 the chain is on the cytoplasmic side; sequence TPLPY. The chain crosses the membrane as a helical span at residues 231–251; the sequence is ISQFGLYTSLLSFAMTFIICI. The Extracellular portion of the chain corresponds to 252-281; it reads VSRSDNTVDPWPKASNIFGSFDNQTGWNSS. The helical transmembrane segment at 282 to 302 threads the bilayer; the sequence is GMAFVVGLVNPIWAFVGIDSA. The Cytoplasmic portion of the chain corresponds to 303 to 321; it reads THMIDEVGYSKSRFLVPKV. A helical membrane pass occupies residues 322–342; it reads IITTIIVGFVTSFIYCVGLFF. Topologically, residues 343-369 are extracellular; it reads CITDQTAVVESILPIVEIFYQATGNRN. The helical transmembrane segment at 370-390 threads the bilayer; the sequence is LSVFLQCMCITTGFVSGIASG. Residues 391–439 are Cytoplasmic-facing; sequence TWQSRILQSFGKSYAPFYKEGSLGNKSLKKLAVLTPGFKSPLYAHFLSQ. Residues 440–460 traverse the membrane as a helical segment; it reads ICVTIIGCIFMGSSTAFNAII. T461 is a topological domain (extracellular). The helical transmembrane segment at 462–482 threads the bilayer; that stretch reads ACITLLLMSYAVPSFIFLFVI. The Cytoplasmic segment spans residues 483 to 507; the sequence is KKEKFIHRIESDVNCVSRPNRRRMS. The helical transmembrane segment at 508 to 528 threads the bilayer; the sequence is MIPHIICILWTLFCLVFLSFP. The Extracellular portion of the chain corresponds to 529 to 540; sequence YTLPVTAGNMNY. The chain crosses the membrane as a helical span at residues 541 to 560; it reads TSVVYAVVFCIISIVVFPTC. A topological domain (cytoplasmic) is located at residue I561.

The protein belongs to the amino acid-polyamine-organocation (APC) superfamily.

It is found in the membrane. Its function is as follows. Transport into the cell of 7-keto 8-aminopelargonic acid. The sequence is that of 7-keto 8-aminopelargonic acid transporter (BIO5) from Saccharomyces cerevisiae (strain ATCC 204508 / S288c) (Baker's yeast).